Here is a 136-residue protein sequence, read N- to C-terminus: MITDPIADMLARIKNAQAARKSEVYIPHSKIKEKIAQILKKEGYIEDYTISEENKKGNQGTLIIKIKYLDNRNTKPAISGLRRVSKPGLRKYVGADEIPYVRKGLGIAILSTNKGILTDAEARKEKVGGEVLCYVW.

It belongs to the universal ribosomal protein uS8 family. In terms of assembly, part of the 30S ribosomal subunit. Contacts proteins S5 and S12.

In terms of biological role, one of the primary rRNA binding proteins, it binds directly to 16S rRNA central domain where it helps coordinate assembly of the platform of the 30S subunit. This chain is Small ribosomal subunit protein uS8, found in Persephonella marina (strain DSM 14350 / EX-H1).